The sequence spans 345 residues: DNA-directed RNA polymerase subunit alpha (345 aa).

Residues 1–233 (MVRNWCSLIR…KQLQVFVGLH (233 aa)) are alpha N-terminal domain (alpha-NTD). Positions 256–345 (LNDILLRHVE…EEMGEIQEEG (90 aa)) are alpha C-terminal domain (alpha-CTD).

This sequence belongs to the RNA polymerase alpha chain family. Homodimer. The RNAP catalytic core consists of 2 alpha, 1 beta, 1 beta' and 1 omega subunit. When a sigma factor is associated with the core the holoenzyme is formed, which can initiate transcription.

It carries out the reaction RNA(n) + a ribonucleoside 5'-triphosphate = RNA(n+1) + diphosphate. DNA-dependent RNA polymerase catalyzes the transcription of DNA into RNA using the four ribonucleoside triphosphates as substrates. The chain is DNA-directed RNA polymerase subunit alpha from Syntrophus aciditrophicus (strain SB).